A 148-amino-acid polypeptide reads, in one-letter code: FAD synthase (148 aa).

ATP is bound by residues 9 to 10, 14 to 17, Asn92, and Tyr119; these read TF and HPGH.

Belongs to the archaeal FAD synthase family. Homodimer. A divalent metal cation serves as cofactor.

The enzyme catalyses FMN + ATP + H(+) = FAD + diphosphate. It functions in the pathway cofactor biosynthesis; FAD biosynthesis; FAD from FMN: step 1/1. Catalyzes the transfer of the AMP portion of ATP to flavin mononucleotide (FMN) to produce flavin adenine dinucleotide (FAD) coenzyme. This chain is FAD synthase, found in Methanolacinia petrolearia (strain DSM 11571 / OCM 486 / SEBR 4847) (Methanoplanus petrolearius).